The primary structure comprises 349 residues: uncharacterized protein (349 aa).

Ser2 bears the Phosphoserine mark.

This is an uncharacterized protein from Saccharomyces cerevisiae (strain ATCC 204508 / S288c) (Baker's yeast).